The primary structure comprises 215 residues: MANRGATRPNGPNTGNKICQFKLVLLGESAVGKSSLVLRFVKGQFHEFQESTIGAAFLTQTVCLDDTTVKFEIWDTAGQERYHSLAPMYYRGAQAAIVVYDITNEESFARAKNWVKELQRQASPNIVIALSGNKADLANKRAVDFQEAQSYADDNSLLFMETSAKTSMNVNEIFMAIAKKLPKNEPQNPGANSARGRGVDLTEPAQPARSQCCSN.

Residues Ser29, Ala30, Gly32, Lys33, Ser34, Ser35, His46, Glu47, Thr52, and Gly78 each contribute to the GTP site. Ser34 provides a ligand contact to Mg(2+). 2 consecutive short sequence motifs (switch) follow at residues 44 to 56 and 77 to 93; these read QFHEFQESTIGAA and AGQERYHSLAPMYYRGA. Residue Thr52 coordinates Mg(2+). Ser84 carries the phosphoserine modification. Positions 133, 134, 136, 164, and 165 each coordinate GTP. The interval 181-215 is disordered; it reads LPKNEPQNPGANSARGRGVDLTEPAQPARSQCCSN. Residues Cys212 and Cys213 are each lipidated (S-geranylgeranyl cysteine).

It belongs to the small GTPase superfamily. Rab family. As to quaternary structure, interacts with GDI1; this promotes dissociation from membranes; phosphorylation at Ser-84 disrupts this interaction. Interacts with GDI2; phosphorylation at Ser-84 disrupts the interaction. Interacts with EEA1. Interacts with RIN1 and GAPVD1, which regulate its pathway, probably by acting as a GEF. Interacts with RINL. Interacts with ALS2CL, SUN2, ZFYVE20 and RUFY1. Interacts with RABEP1; one RABEP1 homodimer binds two RAB5A chains, but at opposite sides of the dimer. Interacts with SGSM1 and SGSM3. Interacts with PIK3CB. Interacts with OCRL and INPP5F. May be a component of a complex composed of RAB5A, DYN2 and PIK3C3. Does not interact with BLOC-3 complex (heterodimer of HPS1 and HPS4). Interacts with CLN5. Interacts with APPL2. Interacts with F8A1/F8A2/F8A3. Found in a complex with F8A1/F8A2/F8A3, HTT and RAB5A; mediates the recruitment of HTT by RAB5A onto early endosomes. Interacts with ATP9A. Interacts with PPP1R21; mediates the recruitment of FERRY complex by RAB5A onto early endosomes. The cofactor is Mg(2+). Phosphorylation of Ser-84 in the switch II region by LRRK2 prevents the association of RAB regulatory proteins, including RAB GDP dissociation inhibitors GDI1 and GDI2.

The protein localises to the cell membrane. The protein resides in the early endosome membrane. It localises to the melanosome. Its subcellular location is the cytoplasmic vesicle. It is found in the cell projection. The protein localises to the ruffle. The protein resides in the membrane. It localises to the cytoplasm. Its subcellular location is the cytosol. It is found in the phagosome membrane. The protein localises to the endosome membrane. It carries out the reaction GTP + H2O = GDP + phosphate + H(+). Regulated by guanine nucleotide exchange factors (GEFs) including RINL, which promote the exchange of bound GDP for free GTP. Regulated by GTPase activating proteins (GAPs) which increase the GTP hydrolysis activity. Inhibited by GDP dissociation inhibitors (GDIs). The small GTPases Rab are key regulators of intracellular membrane trafficking, from the formation of transport vesicles to their fusion with membranes. Rabs cycle between an inactive GDP-bound form and an active GTP-bound form that is able to recruit to membranes different sets of downstream effectors directly responsible for vesicle formation, movement, tethering and fusion. RAB5A is required for the fusion of plasma membranes and early endosomes. Contributes to the regulation of filopodia extension. Required for the exosomal release of SDCBP, CD63, PDCD6IP and syndecan. Regulates maturation of apoptotic cell-containing phagosomes, probably downstream of DYN2 and PIK3C3. This Mus musculus (Mouse) protein is Ras-related protein Rab-5A.